Here is a 326-residue protein sequence, read N- to C-terminus: Protoheme IX farnesyltransferase (326 aa).

The next 8 helical transmembrane spans lie at 35-55, 60-80, 106-126, 129-149, 157-177, 185-205, 242-262, and 283-303; these read LIPL…GWPL, LVCT…LNCL, SAFI…VSGV, LAAG…TALL, IVIG…AATG, WLFA…ALLL, GFGV…LLPF, and AKGL…LLIL.

Belongs to the UbiA prenyltransferase family. Protoheme IX farnesyltransferase subfamily.

The protein localises to the cell inner membrane. The enzyme catalyses heme b + (2E,6E)-farnesyl diphosphate + H2O = Fe(II)-heme o + diphosphate. The protein operates within porphyrin-containing compound metabolism; heme O biosynthesis; heme O from protoheme: step 1/1. In terms of biological role, converts heme B (protoheme IX) to heme O by substitution of the vinyl group on carbon 2 of heme B porphyrin ring with a hydroxyethyl farnesyl side group. This is Protoheme IX farnesyltransferase from Parasynechococcus marenigrum (strain WH8102).